A 127-amino-acid chain; its full sequence is Aspartate 1-decarboxylase (127 aa).

S25 (schiff-base intermediate with substrate; via pyruvic acid) is an active-site residue. S25 is subject to Pyruvic acid (Ser). Position 57 (T57) interacts with substrate. Y58 functions as the Proton donor in the catalytic mechanism. A substrate-binding site is contributed by 73–75 (GAA).

The protein belongs to the PanD family. As to quaternary structure, heterooctamer of four alpha and four beta subunits. Requires pyruvate as cofactor. In terms of processing, is synthesized initially as an inactive proenzyme, which is activated by self-cleavage at a specific serine bond to produce a beta-subunit with a hydroxyl group at its C-terminus and an alpha-subunit with a pyruvoyl group at its N-terminus.

Its subcellular location is the cytoplasm. The catalysed reaction is L-aspartate + H(+) = beta-alanine + CO2. It functions in the pathway cofactor biosynthesis; (R)-pantothenate biosynthesis; beta-alanine from L-aspartate: step 1/1. In terms of biological role, catalyzes the pyruvoyl-dependent decarboxylation of aspartate to produce beta-alanine. In Neisseria gonorrhoeae (strain ATCC 700825 / FA 1090), this protein is Aspartate 1-decarboxylase.